The following is a 621-amino-acid chain: Protein CASP (621 aa).

Topologically, residues 1-574 (MEIVSRAWES…ILATPKSRTV (574 aa)) are cytoplasmic. Coiled coils occupy residues 101–445 (LLKG…VQDI) and 473–525 (ILTS…FLQS). Residues 575–595 (FFSYLLILHALIMLVLYKFAF) traverse the membrane as a helical; Anchor for type IV membrane protein segment. The Lumenal portion of the chain corresponds to 596–621 (DQSVVRDAETECEYKFHQHMLDNHKQ).

This sequence belongs to the CASP family.

The protein localises to the golgi apparatus membrane. Its function is as follows. May be involved in intra-Golgi retrograde transport. In Caenorhabditis elegans, this protein is Protein CASP (ceh-44).